The following is a 952-amino-acid chain: Respiratory burst oxidase homolog protein E (952 aa).

The Cytoplasmic portion of the chain corresponds to 1-392; sequence MKLSPLSFST…QCLILDNWQR (392 aa). EF-hand-like stretches follow at residues 211 to 219 and 245 to 256; these read SKNGLLARD and RRQKLEKITKDE. EF-hand domains are found at residues 268–303 and 312–347; these read SFDARLQIFFDMADSNEDGKITREEIKELLMLSASA and QAEEYASLIMEELDPENFGYIELWQLETLLLQRDAY. Residues Asp-281, Asn-283, Asp-285, Lys-287, and Glu-292 each coordinate Ca(2+). The chain crosses the membrane as a helical span at residues 393-413; sequence SWVLLVWVMLMAILFVWKFLE. Residues 414 to 475 lie on the Extracellular side of the membrane; that stretch reads YREKAAFKVM…PFDDNINFHK (62 aa). The region spanning 431–587 is the Ferric oxidoreductase domain; sequence KGAAETLKLN…LLVVVYIMLI (157 aa). Residues 476-496 form a helical membrane-spanning segment; sequence IIACAIAIGILVHAGTHLACD. Topologically, residues 497–531 are cytoplasmic; it reads FPRIINSSPEQFVLIASAFNGTKPTFKDLMTGAEG. Residues 532 to 552 traverse the membrane as a helical segment; sequence ITGISMVILTTIAFTLASTHF. The Extracellular portion of the chain corresponds to 553 to 574; it reads RRNRVRLPAPLDRLTGFNAFWY. Residues 575-595 form a helical membrane-spanning segment; the sequence is THHLLVVVYIMLIVHGTFLFF. Over 596–603 the chain is Cytoplasmic; the sequence is ADKWYQKT. The chain crosses the membrane as a helical span at residues 604–621; that stretch reads TWMYISVPLVLYVAERSL. The Extracellular portion of the chain corresponds to 622-750; that stretch reads RACRSKHYSV…PYGAPAQDYR (129 aa). One can recognise an FAD-binding FR-type domain in the interval 626–748; sequence SKHYSVKILK…DGPYGAPAQD (123 aa). Residues 751–771 form a helical membrane-spanning segment; it reads SYDVLLLIGLGIGATPFISIL. Residues 772-952 are Cytoplasmic-facing; the sequence is KDLLNNSRDE…TRFEFHKEHF (181 aa).

It belongs to the RBOH (TC 5.B.1.3) family. In terms of assembly, monomer and homodimer. In terms of tissue distribution, expressed in roots, inflorescences, leaves and stems.

Its subcellular location is the membrane. In terms of biological role, calcium-dependent NADPH oxidase that generates superoxide. The polypeptide is Respiratory burst oxidase homolog protein E (RBOHE) (Arabidopsis thaliana (Mouse-ear cress)).